A 1767-amino-acid chain; its full sequence is Trans-Golgi network-localized SYP41-interacting protein 1 (1767 aa).

Positions 1 to 72 (MHEKDDLPQD…LTTDDDDNDD (72 aa)) are disordered. The Cytoplasmic portion of the chain corresponds to 1–1748 (MHEKDDLPQD…RVLMSRPQAR (1748 aa)). The span at 16–32 (IENDDESNGQEEEELDP) shows a compositional bias: acidic residues. Coiled-coil stretches lie at residues 276–436 (LSHL…MSTA), 493–516 (VRSLAEERKELTNVSQEYNRLKDL), 570–590 (KSNIRKELDDLSFSLKKMEET), 684–805 (VSNL…LQQS), and 845–1082 (IQEV…LSSK). A compositionally biased stretch (polar residues) spans 1177-1190 (DNSVNTEPENSQGS). A disordered region spans residues 1177-1198 (DNSVNTEPENSQGSAADEDEIS). 4 coiled-coil regions span residues 1251 to 1310 (NSSL…FQEN), 1362 to 1424 (IRDM…WHEK), 1522 to 1542 (LKKATEAESTTELELVKAKNE), and 1603 to 1630 (LAGSEKLVDKLSLRVKEFEEKLQTKAIQ). A helical; Anchor for type IV membrane protein transmembrane segment spans residues 1749 to 1766 (LGVMVYSLLLHLWLLASI). A topological domain (vesicular) is located at residue leucine 1767.

In terms of assembly, interacts with SYP41. As to expression, expressed ubiquitously in roots, leaves and flowers, and, to a lower extent, in stems.

It localises to the golgi apparatus. Its subcellular location is the trans-Golgi network membrane. Tethering factor involved in vesicle fusion at the trans-Golgi network (TGN) thus being required for efficient protein trafficking to the vacuole. Implicated in resistance to salt and osmotic stresses. Modulates the cell morphology (e.g. epidermal cell file rotation (CFR) and cell expansion) in mature regions of roots and the base of hypocotyls as well as root skewing, a process leading to root movement within the soil in order to maximize anchorage and nutrient acquisition, probably by regulating microtubule stabilization independently of their orientation. This chain is Trans-Golgi network-localized SYP41-interacting protein 1, found in Arabidopsis thaliana (Mouse-ear cress).